The sequence spans 404 residues: Argininosuccinate synthase (404 aa).

Residues 10-18 and alanine 37 each bind ATP; that span reads AYSGGLDTS. Residues tyrosine 90 and serine 95 each coordinate L-citrulline. Residue glycine 120 coordinates ATP. Threonine 122, asparagine 126, and aspartate 127 together coordinate L-aspartate. Residue asparagine 126 coordinates L-citrulline. 5 residues coordinate L-citrulline: arginine 130, serine 180, serine 189, glutamate 265, and tyrosine 277.

The protein belongs to the argininosuccinate synthase family. Type 1 subfamily. In terms of assembly, homotetramer.

It is found in the cytoplasm. The enzyme catalyses L-citrulline + L-aspartate + ATP = 2-(N(omega)-L-arginino)succinate + AMP + diphosphate + H(+). It functions in the pathway amino-acid biosynthesis; L-arginine biosynthesis; L-arginine from L-ornithine and carbamoyl phosphate: step 2/3. The polypeptide is Argininosuccinate synthase (Helicobacter hepaticus (strain ATCC 51449 / 3B1)).